Consider the following 250-residue polypeptide: Adenosylcobinamide-GDP ribazoletransferase (250 aa).

The next 6 membrane-spanning stretches (helical) occupy residues 31 to 51 (ISYLPLVGLIIGGFNAIVYFV), 55 to 75 (FILGTLPIVLALLANTIITGA), 106 to 126 (VGTNGAIAIVFDFMLRYAVLN), 133 to 153 (IIIALILSPVVAKTVVTLLMC), 187 to 207 (IGYVLIGYKYVALLLITVLFI), and 230 to 250 (NEIAEIIFMLALLSFKGCGLL).

It belongs to the CobS family. Mg(2+) serves as cofactor.

The protein localises to the cell membrane. The catalysed reaction is alpha-ribazole + adenosylcob(III)inamide-GDP = adenosylcob(III)alamin + GMP + H(+). The enzyme catalyses alpha-ribazole 5'-phosphate + adenosylcob(III)inamide-GDP = adenosylcob(III)alamin 5'-phosphate + GMP + H(+). Its pathway is cofactor biosynthesis; adenosylcobalamin biosynthesis; adenosylcobalamin from cob(II)yrinate a,c-diamide: step 7/7. Functionally, joins adenosylcobinamide-GDP and alpha-ribazole to generate adenosylcobalamin (Ado-cobalamin). Also synthesizes adenosylcobalamin 5'-phosphate from adenosylcobinamide-GDP and alpha-ribazole 5'-phosphate. The sequence is that of Adenosylcobinamide-GDP ribazoletransferase from Clostridium novyi (strain NT).